The chain runs to 463 residues: UDP-N-acetylmuramate--L-alanine ligase (463 aa).

112–118 (GTHGKTT) serves as a coordination point for ATP.

This sequence belongs to the MurCDEF family.

The protein localises to the cytoplasm. It carries out the reaction UDP-N-acetyl-alpha-D-muramate + L-alanine + ATP = UDP-N-acetyl-alpha-D-muramoyl-L-alanine + ADP + phosphate + H(+). It functions in the pathway cell wall biogenesis; peptidoglycan biosynthesis. In terms of biological role, cell wall formation. The sequence is that of UDP-N-acetylmuramate--L-alanine ligase from Dechloromonas aromatica (strain RCB).